The primary structure comprises 138 residues: Putative pre-16S rRNA nuclease (138 aa).

It belongs to the YqgF nuclease family.

It localises to the cytoplasm. Its function is as follows. Could be a nuclease involved in processing of the 5'-end of pre-16S rRNA. This is Putative pre-16S rRNA nuclease from Flavobacterium johnsoniae (strain ATCC 17061 / DSM 2064 / JCM 8514 / BCRC 14874 / CCUG 350202 / NBRC 14942 / NCIMB 11054 / UW101) (Cytophaga johnsonae).